The following is a 65-amino-acid chain: VESP-VB2 (65 aa).

Positions 1-23 (MKMSILFLFALIASLACLQLTFA) are cleaved as a signal peptide. AXPX repeat units follow at residues 23-26 (AAPA), 27-30 (ASPF), 31-34 (ANPG), 35-38 (ASPE), 39-42 (AAPL), 43-46 (ADPL), and 47-50 (ADPF). Positions 24–49 (APAASPFANPGASPEAAPLADPLADP) are excised as a propeptide. Leu-62 carries the post-translational modification Leucine amide.

The protein belongs to the MCD family. Mastoparan subfamily. As to expression, expressed by the venom gland.

Its subcellular location is the secreted. In terms of biological role, antimicrobial peptide. Shows activity against both Gram-positive and -negative bacteria, as well against fungi. Also promotes important mast cell degranulation. Shows little hemolytic activity on rabbit and human erythrocytes. Its mast cell degranulation activity may be related to the activation of G-protein coupled receptors in mast cells as well as interaction with other proteins located in cell endosomal membranes in the mast cells. This chain is VESP-VB2, found in Vespa bicolor (Black shield wasp).